The sequence spans 450 residues: Probable ATP-dependent RNA helicase MG425 homolog (450 aa).

The short motif at 3-31 (STFNELGVSPALIATLKDNNINQPTTIQQ) is the Q motif element. The Helicase ATP-binding domain maps to 34-206 (IPQFLQHQNL…KQITKNGIFL (173 aa)). 47 to 54 (SPTGTGKT) contacts ATP. The DEVD box motif lies at 154-157 (DEVD). The Helicase C-terminal domain occupies 234-384 (RKKQALYSLV…PLRPMRLRLI (151 aa)). The tract at residues 429 to 450 (MRQPERDMQKNKLHDSDWQSNM) is disordered. Residues 430-450 (RQPERDMQKNKLHDSDWQSNM) are compositionally biased toward basic and acidic residues.

Belongs to the DEAD box helicase family.

The catalysed reaction is ATP + H2O = ADP + phosphate + H(+). The chain is Probable ATP-dependent RNA helicase MG425 homolog from Mycoplasma pneumoniae (strain ATCC 29342 / M129 / Subtype 1) (Mycoplasmoides pneumoniae).